The sequence spans 56 residues: Large ribosomal subunit protein bL32 (56 aa).

Basic residues predominate over residues 1–16; sequence MAVQKSKKSRSMRGMR. Residues 1 to 21 form a disordered region; it reads MAVQKSKKSRSMRGMRRSHDA.

This sequence belongs to the bacterial ribosomal protein bL32 family.

This is Large ribosomal subunit protein bL32 from Vibrio atlanticus (strain LGP32) (Vibrio splendidus (strain Mel32)).